Here is a 356-residue protein sequence, read N- to C-terminus: Inositol monophosphatase 3 (356 aa).

Residues 11–31 (LGIGVFCLLGLGVLYHVYSGF) form a helical membrane-spanning segment. Mg(2+) contacts are provided by Glu127, Asp167, Leu169, Asp170, and Asp293. Glu127 provides a ligand contact to substrate. Substrate is bound by residues 169-172 (LDAT) and Asp293.

Belongs to the inositol monophosphatase superfamily. The cofactor is Mg(2+).

It localises to the membrane. The enzyme catalyses a myo-inositol phosphate + H2O = myo-inositol + phosphate. Its pathway is polyol metabolism; myo-inositol biosynthesis; myo-inositol from D-glucose 6-phosphate: step 2/2. The sequence is that of Inositol monophosphatase 3 (bpnt2) from Xenopus tropicalis (Western clawed frog).